A 262-amino-acid polypeptide reads, in one-letter code: 3-methyl-2-oxobutanoate hydroxymethyltransferase (262 aa).

Positions 42 and 81 each coordinate Mg(2+). Residues 42 to 43, aspartate 81, and lysine 110 each bind 3-methyl-2-oxobutanoate; that span reads DS. A Mg(2+)-binding site is contributed by glutamate 112. The active-site Proton acceptor is glutamate 180.

This sequence belongs to the PanB family. In terms of assembly, homodecamer; pentamer of dimers. Mg(2+) serves as cofactor.

The protein resides in the cytoplasm. The catalysed reaction is 3-methyl-2-oxobutanoate + (6R)-5,10-methylene-5,6,7,8-tetrahydrofolate + H2O = 2-dehydropantoate + (6S)-5,6,7,8-tetrahydrofolate. It participates in cofactor biosynthesis; (R)-pantothenate biosynthesis; (R)-pantoate from 3-methyl-2-oxobutanoate: step 1/2. Its function is as follows. Catalyzes the reversible reaction in which hydroxymethyl group from 5,10-methylenetetrahydrofolate is transferred onto alpha-ketoisovalerate to form ketopantoate. The chain is 3-methyl-2-oxobutanoate hydroxymethyltransferase from Legionella pneumophila (strain Lens).